The sequence spans 61 residues: ERMES regulator 1 (61 aa).

Topologically, residues 1–20 (MLPNLRRIFASFRTEEEERS) are mitochondrial intermembrane. A helical membrane pass occupies residues 21 to 43 (YSRKAFFHLIGYITCSVLFSWLV). At 44-61 (RKKVISSPVVSSPIHALS) the chain is on the cytoplasmic side.

It belongs to the EMR1 family. Interacts with the ER-mitochondria encounter structure (ERMES) complex. Interacts with mdm12. Interacts with mdm34.

Its subcellular location is the mitochondrion outer membrane. Its function is as follows. Mediates the formation of endoplasmic reticulum (ER)-mitochondria encounter structure (ERMES) foci, thereby contributing to the formation of ER-mitochondrial contact sites. The chain is ERMES regulator 1 from Schizosaccharomyces pombe (strain 972 / ATCC 24843) (Fission yeast).